A 486-amino-acid chain; its full sequence is RAC-beta serine/threonine-protein kinase A (486 aa).

The PH domain occupies 5–110; it reads MVIKEGWLQK…WIIAIQTVAN (106 aa). O-linked (GlcNAc) serine glycans are attached at residues serine 133 and serine 136. Residues 157–414 form the Protein kinase domain; sequence FDYLKLLGKG…AQEVMSHRFF (258 aa). Residues 163 to 171 and lysine 186 contribute to the ATP site; that span reads LGKGTFGKV. Residue aspartate 280 is the Proton acceptor of the active site. O-linked (GlcNAc) threonine glycosylation is present at threonine 311. Threonine 314 carries the phosphothreonine modification. An O-linked (GlcNAc) threonine glycan is attached at threonine 318. The region spanning 415-486 is the AGC-kinase C-terminal domain; sequence VSINWQDVTE…QFSYSASIRE (72 aa). The disordered stretch occupies residues 455-486; sequence LTPPDRYDNLDALESDQRPHFPQFSYSASIRE. Residues 459–473 show a composition bias toward basic and acidic residues; it reads DRYDNLDALESDQRP. Phosphoserine is present on serine 479. O-linked (GlcNAc) serine; alternate glycosylation is present at serine 479.

It belongs to the protein kinase superfamily. AGC Ser/Thr protein kinase family. RAC subfamily. In terms of processing, phosphorylation on Thr-314 and Ser-479 is required for full activity. Phosphorylation of the activation loop at Thr-314 by PDPK1/PDK1 is a prerequisite for full activation. Phosphorylation by mTORC2 at Ser-479 in response to growth factors plays a key role in AKT1 activation by facilitating subsequent phosphorylation of the activation loop by PDPK1/PDK1.

It catalyses the reaction L-seryl-[protein] + ATP = O-phospho-L-seryl-[protein] + ADP + H(+). The enzyme catalyses L-threonyl-[protein] + ATP = O-phospho-L-threonyl-[protein] + ADP + H(+). Two specific sites, one in the kinase domain (Thr-314) and the other in the C-terminal regulatory region (Ser-479), need to be phosphorylated for its full activation. Its function is as follows. Akt2-a is one of several closely related serine/threonine-protein kinases known as the AKT kinase, and which regulate many processes including metabolism, proliferation, cell survival, growth and angiogenesis. This is mediated through serine and/or threonine phosphorylation of a range of downstream substrates. Over 100 substrate candidates have been reported so far, but for most of them, no isoform specificity has been reported. May be involved in the inhibition of ciliogenesis. The polypeptide is RAC-beta serine/threonine-protein kinase A (akt2-a) (Xenopus laevis (African clawed frog)).